A 393-amino-acid polypeptide reads, in one-letter code: Geranylgeranyl pyrophosphate synthase 2 (393 aa).

Residues Lys-109, Arg-112, and His-141 each coordinate isopentenyl diphosphate. Residues Asp-148 and Asp-152 each coordinate Mg(2+). Residue Arg-157 coordinates dimethylallyl diphosphate. Arg-158 lines the isopentenyl diphosphate pocket. Dimethylallyl diphosphate contacts are provided by Lys-235, Thr-236, and Gln-275. Residue Asp-278 coordinates Mg(2+). Residues Asn-282, Lys-292, and Lys-302 each contribute to the dimethylallyl diphosphate site.

This sequence belongs to the FPP/GGPP synthase family. It depends on Mg(2+) as a cofactor.

It carries out the reaction isopentenyl diphosphate + dimethylallyl diphosphate = (2E)-geranyl diphosphate + diphosphate. The catalysed reaction is isopentenyl diphosphate + (2E)-geranyl diphosphate = (2E,6E)-farnesyl diphosphate + diphosphate. It catalyses the reaction isopentenyl diphosphate + (2E,6E)-farnesyl diphosphate = (2E,6E,10E)-geranylgeranyl diphosphate + diphosphate. It participates in plant hormone biosynthesis; gibberellin biosynthesis. In terms of biological role, geranylgeranyl pyrophosphate synthase; part of the gene cluster that mediates the biosynthesis of gibberellins (GAs), diterpenoids that may provide a selective advantage during infection of the preferred host plant, rice. Gibberellins (GAs) are diterpenoids and are synthesized via the mevalonate pathway. Biosynthesis of the major metabolite GA3 (gibberellic acid) from geranylgeranyl diphosphate (GGPP) requires 13 steps. The GGPP produced by the geranylgeranyl diphosphate synthase GGS2 is converted to ent-kaurene via ent-copalyldiphosphate in a two-step cyclization reaction performed by the bifunctional ent-copalyl diphosphate synthase/ent-kaurene synthase enzyme (CPS/KS). Ent-Kaurene is metabolized to GAs by a series of oxidation reactions catalyzed by cytochrome P450 monooxygenases. Cytochrome P450 monooxygenase P450-4 is an ent-kaurene oxidase that catalyzes the three oxidation steps between ent-kaurene and ent-kaurenoic acid. The highly multifunctional cytochrome P450 monooxygenase P450-1 then catalyzes four steps involving oxidation at two carbon atoms, in the main pathway from ent-kaurenoic acid to GA14 via GA12-aldehyde as well as producing kaurenolides and fujenoic acids as by-products. The cytochrome P450 monooxygenase P450-2 then converts GA14 to GA4 by removal of C-20. GA4 is further converted to GA7 by the GA4 desaturase DES via 1,2-desaturation before cytochrome P450 monooxygenase P450-3, a 13-hydroxylase, hydroxylates GA7 to GA3, the final product of the GA-biosynthetic pathway. This Gibberella fujikuroi (strain CBS 195.34 / IMI 58289 / NRRL A-6831) (Bakanae and foot rot disease fungus) protein is Geranylgeranyl pyrophosphate synthase 2.